The following is a 418-amino-acid chain: E3 ubiquitin-protein ligase makorin-2 (418 aa).

2 consecutive C3H1-type zinc fingers follow at residues 2–29 and 31–58; these read NTKH…HDLA and SKPS…HVKP. The segment at 76–100 is disordered; the sequence is ESTPPLLPTQEAAAPVTKSAPQRRE. The C3H1-type 3 zinc finger occupies 164–191; the sequence is DAPQQLCPFAQAGGCHYGESCPYIHGNV. Positions 192-221 are makorin-type Cys-His; sequence CEICGLQVLHPYDQEQRGHHEKLCMANFER. The RING-type zinc finger occupies 237-291; that stretch reads CSICMERVYDKQSPSERRFGILSNCHHTYCLACIRQWRCARQFENPVIKSCPECR. Residues 320–349 form a C3H1-type 4 zinc finger; that stretch reads GMGKKACKYFDQGRGTCPFGGKCLYLHAYP.

The protein localises to the cytoplasm. Its subcellular location is the nucleus. It catalyses the reaction S-ubiquitinyl-[E2 ubiquitin-conjugating enzyme]-L-cysteine + [acceptor protein]-L-lysine = [E2 ubiquitin-conjugating enzyme]-L-cysteine + N(6)-ubiquitinyl-[acceptor protein]-L-lysine.. It participates in protein modification; protein ubiquitination. Functionally, E3 ubiquitin ligase catalyzing the covalent attachment of ubiquitin moieties onto substrate proteins. Inhibits neurogenesis and axis formation during embryonic development by modulating the phosphatidylinositol 3-kinase (PI3K) pathway. Acts downstream of PI3K and akt1 to up-regulate gsk3b mRNA expression. This chain is E3 ubiquitin-protein ligase makorin-2 (mkrn2), found in Xenopus tropicalis (Western clawed frog).